The primary structure comprises 121 residues: MDQLIQLVEATQQRNDIPEVRPGDTVRIQLKVIEGEKERLQAFEGVVIGDKGMGASKTITVRKISHGVGVERIIPVNSPNIESVTVVRSGKARRAKLFYLRKRTGKAALKVKERKSASAEA.

Belongs to the bacterial ribosomal protein bL19 family.

Functionally, this protein is located at the 30S-50S ribosomal subunit interface and may play a role in the structure and function of the aminoacyl-tRNA binding site. This Chlorobaculum tepidum (strain ATCC 49652 / DSM 12025 / NBRC 103806 / TLS) (Chlorobium tepidum) protein is Large ribosomal subunit protein bL19.